The primary structure comprises 321 residues: NADH-ubiquinone oxidoreductase chain 1 (321 aa).

Helical transmembrane passes span 7–27, 73–93, 104–124, 148–168, 175–195, 227–247, 256–276, and 297–317; these read ITNS…LTLM, ILLI…WTPI, LGLL…LWAG, VTLG…TMQL, HTWL…STLA, FFLA…ILFI, ELFL…FLWI, and LPLT…ISGI.

This sequence belongs to the complex I subunit 1 family.

The protein resides in the mitochondrion inner membrane. It carries out the reaction a ubiquinone + NADH + 5 H(+)(in) = a ubiquinol + NAD(+) + 4 H(+)(out). In terms of biological role, core subunit of the mitochondrial membrane respiratory chain NADH dehydrogenase (Complex I) that is believed to belong to the minimal assembly required for catalysis. Complex I functions in the transfer of electrons from NADH to the respiratory chain. The immediate electron acceptor for the enzyme is believed to be ubiquinone. In Varanus dumerilii (Dumeril's monitor), this protein is NADH-ubiquinone oxidoreductase chain 1 (MT-ND1).